We begin with the raw amino-acid sequence, 1044 residues long: Protein ITPRID1 (1044 aa).

The segment covering 1-14 (MMAQKSQGSDNLQE) has biased composition (polar residues). Disordered stretches follow at residues 1–20 (MMAQKSQGSDNLQEGQEKSK), 230–251 (EEKAGGESVQRTSVSAAKEHRR), 388–489 (MEEV…SSQE), and 583–607 (PEGAGKVQSHHNESQRSPGNDHTQD). The span at 388–398 (MEEVQSFEEET) shows a compositional bias: acidic residues. Polar residues-rich tracts occupy residues 460–469 (HSLVSSQDCQ) and 480–489 (RASMSFSSQE). Residues 896–937 (SRDMSEEEREEAEQLQTLREALRQQVAELEFQLGDRAQQIRE) adopt a coiled-coil conformation.

In Homo sapiens (Human), this protein is Protein ITPRID1.